We begin with the raw amino-acid sequence, 327 residues long: MQFIDQANIILKAGKGGNGIVSFRREKFVPAGGPSGGNGGRGGSIILVADNNLQTLLDFKFKREIIAEDGCKGGPNKRSGASGEDTILKVPCGTEIRDFKTGIILGDLTKNKESLTIAIGGRGGHGNAYYLSNQNRAPESFTEGQDGEIWEVQLELKLLAEVGIIGLPNAGKSTLISVLSSARPKIANYPFTTLIPNLGVVRKVDGNGCLFADIPGLISGAADGVGLGHDFLRHIQRTKILVHLIDSIAENPIHDFEIIEQELRKYGKGLIDKERIIVLNKMELVDDDYLQIITKKLEELSKKKVLAISSSLKKGLSSLLFEVWKRI.

In terms of domain architecture, Obg spans 1–159 (MQFIDQANII…WEVQLELKLL (159 aa)). The OBG-type G domain maps to 160–327 (AEVGIIGLPN…SLLFEVWKRI (168 aa)). ATP is bound by residues 166–173 (GLPNAGKS), 191–195 (FTTLI), 213–216 (DIPG), 280–283 (NKME), and 309–311 (SSS). Residues serine 173 and threonine 193 each coordinate Mg(2+).

This sequence belongs to the TRAFAC class OBG-HflX-like GTPase superfamily. OBG GTPase family. In terms of assembly, monomer. Mg(2+) serves as cofactor.

Its subcellular location is the cytoplasm. Its function is as follows. An essential GTPase which binds GTP, GDP and possibly (p)ppGpp with moderate affinity, with high nucleotide exchange rates and a fairly low GTP hydrolysis rate. Plays a role in control of the cell cycle, stress response, ribosome biogenesis and in those bacteria that undergo differentiation, in morphogenesis control. This chain is GTPase Obg, found in Prochlorococcus marinus (strain MIT 9312).